Reading from the N-terminus, the 288-residue chain is Lipoyl synthase (288 aa).

Residues cysteine 39, cysteine 44, cysteine 50, cysteine 65, cysteine 69, cysteine 72, and serine 276 each contribute to the [4Fe-4S] cluster site. The 215-residue stretch at 51–265 (WGKGTATFMI…KETGLKKGFE (215 aa)) folds into the Radical SAM core domain.

This sequence belongs to the radical SAM superfamily. Lipoyl synthase family. Requires [4Fe-4S] cluster as cofactor.

The protein localises to the cytoplasm. It catalyses the reaction [[Fe-S] cluster scaffold protein carrying a second [4Fe-4S](2+) cluster] + N(6)-octanoyl-L-lysyl-[protein] + 2 oxidized [2Fe-2S]-[ferredoxin] + 2 S-adenosyl-L-methionine + 4 H(+) = [[Fe-S] cluster scaffold protein] + N(6)-[(R)-dihydrolipoyl]-L-lysyl-[protein] + 4 Fe(3+) + 2 hydrogen sulfide + 2 5'-deoxyadenosine + 2 L-methionine + 2 reduced [2Fe-2S]-[ferredoxin]. It participates in protein modification; protein lipoylation via endogenous pathway; protein N(6)-(lipoyl)lysine from octanoyl-[acyl-carrier-protein]: step 2/2. Functionally, catalyzes the radical-mediated insertion of two sulfur atoms into the C-6 and C-8 positions of the octanoyl moiety bound to the lipoyl domains of lipoate-dependent enzymes, thereby converting the octanoylated domains into lipoylated derivatives. The protein is Lipoyl synthase of Bacteroides fragilis (strain ATCC 25285 / DSM 2151 / CCUG 4856 / JCM 11019 / LMG 10263 / NCTC 9343 / Onslow / VPI 2553 / EN-2).